We begin with the raw amino-acid sequence, 61 residues long: Large ribosomal subunit protein uL29 (61 aa).

It belongs to the universal ribosomal protein uL29 family.

In Nitratidesulfovibrio vulgaris (strain DSM 19637 / Miyazaki F) (Desulfovibrio vulgaris), this protein is Large ribosomal subunit protein uL29.